Here is a 304-residue protein sequence, read N- to C-terminus: Acetyl-coenzyme A carboxylase carboxyl transferase subunit beta (304 aa).

Residues 16–42 (SSLPPKNSEGGLAYFDEPSPEQESTRK) form a disordered region. The 257-residue stretch at 48–304 (LWVKCPKCGE…LLRYHQEGAV (257 aa)) folds into the CoA carboxyltransferase N-terminal domain. Zn(2+)-binding residues include cysteine 52, cysteine 55, cysteine 71, and cysteine 74. A C4-type zinc finger spans residues 52–74 (CPKCGEALFNKDLVENQRVCLTC).

The protein belongs to the AccD/PCCB family. Acetyl-CoA carboxylase is a heterohexamer composed of biotin carboxyl carrier protein (AccB), biotin carboxylase (AccC) and two subunits each of ACCase subunit alpha (AccA) and ACCase subunit beta (AccD). The cofactor is Zn(2+).

It is found in the cytoplasm. The catalysed reaction is N(6)-carboxybiotinyl-L-lysyl-[protein] + acetyl-CoA = N(6)-biotinyl-L-lysyl-[protein] + malonyl-CoA. It participates in lipid metabolism; malonyl-CoA biosynthesis; malonyl-CoA from acetyl-CoA: step 1/1. Its function is as follows. Component of the acetyl coenzyme A carboxylase (ACC) complex. Biotin carboxylase (BC) catalyzes the carboxylation of biotin on its carrier protein (BCCP) and then the CO(2) group is transferred by the transcarboxylase to acetyl-CoA to form malonyl-CoA. The chain is Acetyl-coenzyme A carboxylase carboxyl transferase subunit beta from Desulfitobacterium hafniense (strain Y51).